Here is an 80-residue protein sequence, read N- to C-terminus: Cell division protein ZapB (80 aa).

Residues 3–80 (FEVLEQLESK…ALLGKMDEVE (78 aa)) adopt a coiled-coil conformation. Basic and acidic residues predominate over residues 41–53 (ANELRSQREELEQ). The tract at residues 41 to 60 (ANELRSQREELEQKSQQAQQ) is disordered.

It belongs to the ZapB family. Homodimer. The ends of the coiled-coil dimer bind to each other, forming polymers. Interacts with FtsZ.

It localises to the cytoplasm. Functionally, non-essential, abundant cell division factor that is required for proper Z-ring formation. It is recruited early to the divisome by direct interaction with FtsZ, stimulating Z-ring assembly and thereby promoting cell division earlier in the cell cycle. Its recruitment to the Z-ring requires functional FtsA or ZipA. This chain is Cell division protein ZapB, found in Vibrio campbellii (strain ATCC BAA-1116).